A 227-amino-acid polypeptide reads, in one-letter code: UPF0441 protein YPO0661/y3517/YP_2976 (227 aa).

Positions 198–227 (GGFGESVAKQSSMQRSAATSSKTTTRSMGG) are disordered. A compositionally biased stretch (low complexity) spans 212–227 (RSAATSSKTTTRSMGG).

The protein belongs to the UPF0441 family.

This chain is UPF0441 protein YPO0661/y3517/YP_2976, found in Yersinia pestis.